The chain runs to 161 residues: Phosphopantetheine adenylyltransferase (161 aa).

Residue Ser9 participates in substrate binding. Residues 9-10 (SF) and His17 each bind ATP. Substrate-binding residues include Lys41, Thr74, and Arg88. Residues 89-91 (GVR), Glu99, and 124-130 (NSFVASS) each bind ATP.

It belongs to the bacterial CoaD family. As to quaternary structure, homohexamer. Mg(2+) is required as a cofactor.

Its subcellular location is the cytoplasm. It catalyses the reaction (R)-4'-phosphopantetheine + ATP + H(+) = 3'-dephospho-CoA + diphosphate. It participates in cofactor biosynthesis; coenzyme A biosynthesis; CoA from (R)-pantothenate: step 4/5. In terms of biological role, reversibly transfers an adenylyl group from ATP to 4'-phosphopantetheine, yielding dephospho-CoA (dPCoA) and pyrophosphate. This chain is Phosphopantetheine adenylyltransferase, found in Lactobacillus acidophilus (strain ATCC 700396 / NCK56 / N2 / NCFM).